Here is a 193-residue protein sequence, read N- to C-terminus: Probable DNA-directed RNA polymerase subunit delta (193 aa).

The 70-residue stretch at leucine 14–tryptophan 83 folds into the HTH HARE-type domain. Acidic residues-rich tracts occupy residues glutamate 119 to asparagine 133 and tyrosine 143 to aspartate 193. A disordered region spans residues glutamate 119–aspartate 193.

Belongs to the RpoE family. In terms of assembly, RNAP is composed of a core of 2 alpha, a beta and a beta' subunits. The core is associated with a delta subunit and one of several sigma factors.

Its function is as follows. Participates in both the initiation and recycling phases of transcription. In the presence of the delta subunit, RNAP displays an increased specificity of transcription, a decreased affinity for nucleic acids, and an increased efficiency of RNA synthesis because of enhanced recycling. This Streptococcus thermophilus (strain CNRZ 1066) protein is Probable DNA-directed RNA polymerase subunit delta.